Consider the following 273-residue polypeptide: Large ribosomal subunit protein uL2 (273 aa).

Positions arginine 221 to lysine 273 are disordered. The segment covering lysine 253–lysine 273 has biased composition (basic residues).

It belongs to the universal ribosomal protein uL2 family. In terms of assembly, part of the 50S ribosomal subunit. Forms a bridge to the 30S subunit in the 70S ribosome.

In terms of biological role, one of the primary rRNA binding proteins. Required for association of the 30S and 50S subunits to form the 70S ribosome, for tRNA binding and peptide bond formation. It has been suggested to have peptidyltransferase activity; this is somewhat controversial. Makes several contacts with the 16S rRNA in the 70S ribosome. The chain is Large ribosomal subunit protein uL2 from Mannheimia succiniciproducens (strain KCTC 0769BP / MBEL55E).